Consider the following 96-residue polypeptide: Large ribosomal subunit protein bL27 (96 aa).

A propeptide spanning residues 1–9 (MLRLDLQFF) is cleaved from the precursor. Residues 14-36 (GVGSTKNGRDSQSKRLGAKRADG) are disordered.

Belongs to the bacterial ribosomal protein bL27 family. In terms of processing, the N-terminus is cleaved by ribosomal processing cysteine protease Prp.

This is Large ribosomal subunit protein bL27 from Bacillus anthracis (strain A0248).